Reading from the N-terminus, the 164-residue chain is Phosphopantetheine adenylyltransferase (164 aa).

Ser-9 contacts substrate. ATP contacts are provided by residues Ser-9–Phe-10 and His-17. Substrate-binding residues include Lys-41, Val-78, and Arg-92. ATP-binding positions include Gly-93–Arg-95, Glu-103, and Ser-128–Thr-134.

Belongs to the bacterial CoaD family. In terms of assembly, homohexamer. It depends on Mg(2+) as a cofactor.

The protein localises to the cytoplasm. It catalyses the reaction (R)-4'-phosphopantetheine + ATP + H(+) = 3'-dephospho-CoA + diphosphate. The protein operates within cofactor biosynthesis; coenzyme A biosynthesis; CoA from (R)-pantothenate: step 4/5. Reversibly transfers an adenylyl group from ATP to 4'-phosphopantetheine, yielding dephospho-CoA (dPCoA) and pyrophosphate. This is Phosphopantetheine adenylyltransferase from Sinorhizobium fredii (strain NBRC 101917 / NGR234).